Reading from the N-terminus, the 295-residue chain is Bifunctional protein FolD (295 aa).

NADP(+)-binding positions include 167–169, S192, and I233; that span reads GRS.

This sequence belongs to the tetrahydrofolate dehydrogenase/cyclohydrolase family. In terms of assembly, homodimer.

It carries out the reaction (6R)-5,10-methylene-5,6,7,8-tetrahydrofolate + NADP(+) = (6R)-5,10-methenyltetrahydrofolate + NADPH. It catalyses the reaction (6R)-5,10-methenyltetrahydrofolate + H2O = (6R)-10-formyltetrahydrofolate + H(+). It functions in the pathway one-carbon metabolism; tetrahydrofolate interconversion. Catalyzes the oxidation of 5,10-methylenetetrahydrofolate to 5,10-methenyltetrahydrofolate and then the hydrolysis of 5,10-methenyltetrahydrofolate to 10-formyltetrahydrofolate. The chain is Bifunctional protein FolD from Paramagnetospirillum magneticum (strain ATCC 700264 / AMB-1) (Magnetospirillum magneticum).